A 304-amino-acid polypeptide reads, in one-letter code: Non-specific ribonucleoside hydrolase RihC (304 aa).

Histidine 233 is a catalytic residue.

This sequence belongs to the IUNH family. RihC subfamily.

In terms of biological role, hydrolyzes both purine and pyrimidine ribonucleosides with a broad-substrate specificity. The protein is Non-specific ribonucleoside hydrolase RihC of Escherichia coli O7:K1 (strain IAI39 / ExPEC).